The sequence spans 89 residues: Small ribosomal subunit protein uS17 (89 aa).

This sequence belongs to the universal ribosomal protein uS17 family. As to quaternary structure, part of the 30S ribosomal subunit.

Its function is as follows. One of the primary rRNA binding proteins, it binds specifically to the 5'-end of 16S ribosomal RNA. This is Small ribosomal subunit protein uS17 from Paracidovorax citrulli (strain AAC00-1) (Acidovorax citrulli).